The following is a 1182-amino-acid chain: DNA-directed RNA polymerase subunit beta' (1182 aa).

4 residues coordinate Zn(2+): Cys-59, Cys-61, Cys-74, and Cys-77. The Mg(2+) site is built by Asp-449, Asp-451, and Asp-453. Zn(2+) is bound by residues Cys-794, Cys-868, Cys-875, and Cys-878.

It belongs to the RNA polymerase beta' chain family. As to quaternary structure, the RNAP catalytic core consists of 2 alpha, 1 beta, 1 beta' and 1 omega subunit. When a sigma factor is associated with the core the holoenzyme is formed, which can initiate transcription. Requires Mg(2+) as cofactor. It depends on Zn(2+) as a cofactor.

The enzyme catalyses RNA(n) + a ribonucleoside 5'-triphosphate = RNA(n+1) + diphosphate. DNA-dependent RNA polymerase catalyzes the transcription of DNA into RNA using the four ribonucleoside triphosphates as substrates. This chain is DNA-directed RNA polymerase subunit beta', found in Clostridium acetobutylicum (strain ATCC 824 / DSM 792 / JCM 1419 / IAM 19013 / LMG 5710 / NBRC 13948 / NRRL B-527 / VKM B-1787 / 2291 / W).